Consider the following 322-residue polypeptide: Putative membrane-bound redox modulator Alx (322 aa).

Residues methionine 1–threonine 6 lie on the Periplasmic side of the membrane. The chain crosses the membrane as a helical span at residues proline 7–leucine 27. At glutamine 28–glycine 43 the chain is on the cytoplasmic side. The chain crosses the membrane as a helical span at residues tryptophan 44–alanine 64. Residues glutamate 65–leucine 89 are Periplasmic-facing. Residues alanine 90–leucine 110 traverse the membrane as a helical segment. The Cytoplasmic portion of the chain corresponds to glutamine 111–arginine 113. The chain crosses the membrane as a helical span at residues valine 114–threonine 134. A topological domain (periplasmic) is located at residue tryptophan 135. A helical membrane pass occupies residues leucine 136–valine 156. At lysine 157–glycine 198 the chain is on the cytoplasmic side. The chain crosses the membrane as a helical span at residues leucine 199–phenylalanine 219. The Periplasmic segment spans residues alanine 220–proline 225. Residues alanine 226–leucine 246 form a helical membrane-spanning segment. The Cytoplasmic segment spans residues glycine 247–arginine 261. The helical transmembrane segment at phenylalanine 262–isoleucine 282 threads the bilayer. Over valine 283–tyrosine 286 the chain is Periplasmic. A helical membrane pass occupies residues histidine 287–isoleucine 307. Over asparagine 308 to alanine 321 the chain is Cytoplasmic.

It belongs to the TerC family.

The protein localises to the cell inner membrane. Its function is as follows. Has been proposed to be a redox modulator. This chain is Putative membrane-bound redox modulator Alx (alx), found in Salmonella typhi.